A 71-amino-acid chain; its full sequence is MFRRWVIYIIRLYQRWISPLKTMPSCRFYPTCSQYAIDAVGRYGVIKGGFMALKRILKCHPFHPGGYDPVK.

The protein belongs to the UPF0161 family.

The protein resides in the cell membrane. Its function is as follows. Could be involved in insertion of integral membrane proteins into the membrane. The protein is Putative membrane protein insertion efficiency factor of Acetivibrio thermocellus (strain ATCC 27405 / DSM 1237 / JCM 9322 / NBRC 103400 / NCIMB 10682 / NRRL B-4536 / VPI 7372) (Clostridium thermocellum).